We begin with the raw amino-acid sequence, 227 residues long: uncharacterized protein (227 aa).

Positions 1 to 23 (MKKRFSLIMMTGLLFGLTSPAFA) are cleaved as a signal peptide. The region spanning 36–227 (NVAVLLDASG…FTQQSLMLSK (192 aa)) is the VWFA domain.

This sequence to B.subtilis YwmD.

This is an uncharacterized protein from Bacillus subtilis (strain 168).